The sequence spans 166 residues: 3-isopropylmalate dehydratase small subunit (166 aa).

This sequence belongs to the LeuD family. LeuD type 2 subfamily. In terms of assembly, heterodimer of LeuC and LeuD.

The enzyme catalyses (2R,3S)-3-isopropylmalate = (2S)-2-isopropylmalate. It functions in the pathway amino-acid biosynthesis; L-leucine biosynthesis; L-leucine from 3-methyl-2-oxobutanoate: step 2/4. Its function is as follows. Catalyzes the isomerization between 2-isopropylmalate and 3-isopropylmalate, via the formation of 2-isopropylmaleate. The chain is 3-isopropylmalate dehydratase small subunit from Nautilia profundicola (strain ATCC BAA-1463 / DSM 18972 / AmH).